The chain runs to 209 residues: Guanylate kinase (209 aa).

Positions 8-186 constitute a Guanylate kinase-like domain; the sequence is GVLYIVSAPS…ALQDLVAITR (179 aa). An ATP-binding site is contributed by 15–22; the sequence is APSGAGKT.

This sequence belongs to the guanylate kinase family.

Its subcellular location is the cytoplasm. It catalyses the reaction GMP + ATP = GDP + ADP. Essential for recycling GMP and indirectly, cGMP. The chain is Guanylate kinase from Thiobacillus denitrificans (strain ATCC 25259 / T1).